The sequence spans 1143 residues: Probable ATP-dependent RNA helicase DHX34 (1143 aa).

Disordered regions lie at residues 1-24 (MPPP…EEEA) and 75-94 (TSRK…PALA). The span at 76 to 85 (SRKEEKDPGQ) shows a compositional bias: basic and acidic residues. Positions 172–332 (LQTLKEHQVV…FSNAPVVQVP (161 aa)) constitute a Helicase ATP-binding domain. Position 185 to 192 (185 to 192 (GDTGCGKS)) interacts with ATP. The DEAH box motif lies at 279-282 (DEVH). Residues 368-536 (SIDHKYPPEE…SLVLQMKSMS (169 aa)) form the Helicase C-terminal domain. The segment at 701 to 955 (QAAQVGDSYS…LRARWESALD (255 aa)) is negatively regulates interaction with UPF1. Residues 724 to 766 (LKRQHEEGAGRRRKVLRLQEEQDGGSSDEDRAGPAPPGASDGV) are disordered. Phosphoserine occurs at positions 749 and 750. Positions 810–1143 (PQLAVPDAFN…EVLRHRKQHV (334 aa)) are required for phosphorylation of UPF1. Not required for interaction with UPF1. The segment at 957-1143 (QLAHQAQQQL…EVLRHRKQHV (187 aa)) is required for the interaction with SMG1 and subsequent phosphorylation of UPF1.

The protein belongs to the DEAD box helicase family. DEAH subfamily. In terms of assembly, forms a complex with RUVBL1 and RUVBL2. Part of a complex composed of SMG1, DHX34 and UPF1; within the complex DHX34 acts as a scaffolding protein to facilitate SMG1 phosphorylation of UPF1. Interacts with UPF1, MOV10, EIF4A3, XRN2, SMG6, SMG7, SMG9, UPF3A, UPF3B, CASC3/MLN51, XRN1, DIS3 and DCP1A; the interactions are RNA-independent. Interacts with NCBP1/CPB80; the interaction is RNA-dependent. Interacts (via C-terminus) with SMG1; the interaction is RNA-independent. Expressed in whole blood, testis and spleen. Also expressed in the brain.

It catalyses the reaction ATP + H2O = ADP + phosphate + H(+). Functionally, probable ATP-binding RNA helicase required for nonsense-mediated decay (NMD) degradation of mRNA transcripts containing premature stop codons. Promotes the phosphorylation of UPF1 along with its interaction with key NMD pathway proteins UPF2 and EIF4A3. Interaction with the RUVBL1-RUVBL2 complex results in loss of nucleotide binding ability and ATP hydrolysis of the complex. Negatively regulates the nucleotide binding ability and ATP hydrolysis of the RUVBL1-RUVBL2 complex via induction of N-terminus conformation changes of the RUVBL2 subunits. The chain is Probable ATP-dependent RNA helicase DHX34 from Homo sapiens (Human).